Reading from the N-terminus, the 385-residue chain is Flavin-dependent monooxygenase (385 aa).

FAD is bound by residues 12–15 (ASIA), 34–36 (EKN), 44–47 (YAID), arginine 105, tyrosine 267, aspartate 289, and 296–302 (PLSGQGT).

The protein belongs to the aromatic-ring hydroxylase family. Requires FAD as cofactor.

The enzyme catalyses 7-chlorotetracycline + NADPH + O2 + H(+) = (1S,10S,10aS)-3-(CONH2)-9-Cl-1-(Me2N)-3,3a,4,10-(HO)4-10-Me-2,5-dioxo-1H,10aH,11H,11aH-cyclopenta[b]anthracen-6-olate + CO + NADP(+) + H2O. It carries out the reaction a tetracycline + NADPH + O2 + H(+) = a (1S,10aS)-3-(CONH2)-1-(Me2N)-3,3a,4,6-(HO)4-2,5-dioxo-1H,10aH,11H,11aH-cyclopenta[b]anthracene + CO + NADP(+) + H2O. Inhibited by anhydrotetracycline. Functionally, an FAD-requiring monooxygenase active on tetracycline antibiotic and some of its derivatives, which leads to their inactivation. Expression in E.coli confers high resistance to oxytetracycline, slightly less resistance to tetracycline, moderate resistance to minocycline but no resistance to tigecycline. Degrades tetracycline and oxytetracycline; the reaction requires NADPH. Degrades and confers resistance to chlortetracycline. This chain is Flavin-dependent monooxygenase, found in Unknown prokaryotic organism.